The chain runs to 192 residues: Sarcoplasmic calcium-binding protein 1 (192 aa).

Ala-1 carries the N-acetylalanine modification. 4 consecutive EF-hand domains span residues 4–39 (WDNR…NTLI), 56–91 (IMSN…VCVG), 100–135 (AFKV…RSAF), and 136–171 (ANIK…YAQF). Ca(2+)-binding residues include Asp-17, Asp-19, Asn-21, Asp-28, Asp-69, Asn-71, Asp-73, Glu-75, Glu-80, Asp-113, Asn-115, Asp-117, and Glu-124.

As to quaternary structure, SCPs from crayfish, lobster, and shrimp are polymorphic dimers.

In terms of biological role, like parvalbumins, SCPs seem to be more abundant in fast contracting muscles, but no functional relationship can be established from this distribution. In Astacus leptodactylus (Turkish narrow-clawed crayfish), this protein is Sarcoplasmic calcium-binding protein 1.